Reading from the N-terminus, the 188-residue chain is Translation machinery-associated protein 22 (188 aa).

The region spanning 96–167 is the SUI1 domain; sequence VTIKRIERNK…EIEEFLLEKY (72 aa).

It belongs to the DENR family. In terms of assembly, interacts with the 40S ribosomal subunit.

Its subcellular location is the cytoplasm. The polypeptide is Translation machinery-associated protein 22 (TMA22) (Chaetomium globosum (strain ATCC 6205 / CBS 148.51 / DSM 1962 / NBRC 6347 / NRRL 1970) (Soil fungus)).